A 774-amino-acid chain; its full sequence is Effector protein hopW1-1 (774 aa).

Disordered stretches follow at residues 1–33 (MSPAQIIRTPHSFPPSFTGTSSSAENSHAQSPQ) and 301–340 (CQAGGNGQGQLEASSARPESLRYAPTRAASSGSEARVPGQ). Low complexity predominate over residues 9-23 (TPHSFPPSFTGTSSS). Over residues 24–33 (AENSHAQSPQ) the composition is skewed to polar residues.

It belongs to the HopW family. As to quaternary structure, interacts (via C-terminus) with Arabidopsis WIN1, WIN2 and WIN3.

The protein localises to the secreted. Induces hypersensitive response (HR). This is Effector protein hopW1-1 (hopW1-1) from Pseudomonas syringae pv. maculicola.